The chain runs to 325 residues: ATPase ASNA1 homolog 2 (325 aa).

22-29 (KGGVGKTT) is an ATP binding site. D51 is a catalytic residue. The ATP site is built by E231 and N258. C267 and C270 together coordinate Zn(2+).

It belongs to the arsA ATPase family. As to quaternary structure, homodimer.

Its subcellular location is the cytoplasm. The protein localises to the endoplasmic reticulum. ATPase required for the post-translational delivery of tail-anchored (TA) proteins to the endoplasmic reticulum. Recognizes and selectively binds the transmembrane domain of TA proteins in the cytosol. This complex then targets to the endoplasmic reticulum by membrane-bound receptors, where the tail-anchored protein is released for insertion. This process is regulated by ATP binding and hydrolysis. ATP binding drives the homodimer towards the closed dimer state, facilitating recognition of newly synthesized TA membrane proteins. ATP hydrolysis is required for insertion. Subsequently, the homodimer reverts towards the open dimer state, lowering its affinity for the membrane-bound receptor, and returning it to the cytosol to initiate a new round of targeting. This is ATPase ASNA1 homolog 2 from Paramecium tetraurelia.